A 143-amino-acid polypeptide reads, in one-letter code: Nucleoside diphosphate kinase (143 aa).

6 residues coordinate ATP: Lys-11, Phe-59, Arg-87, Thr-93, Arg-104, and Asn-114. The Pros-phosphohistidine intermediate role is filled by His-117.

This sequence belongs to the NDK family. As to quaternary structure, homotetramer. It depends on Mg(2+) as a cofactor.

It is found in the cytoplasm. It catalyses the reaction a 2'-deoxyribonucleoside 5'-diphosphate + ATP = a 2'-deoxyribonucleoside 5'-triphosphate + ADP. The enzyme catalyses a ribonucleoside 5'-diphosphate + ATP = a ribonucleoside 5'-triphosphate + ADP. Major role in the synthesis of nucleoside triphosphates other than ATP. The ATP gamma phosphate is transferred to the NDP beta phosphate via a ping-pong mechanism, using a phosphorylated active-site intermediate. This is Nucleoside diphosphate kinase from Nitrosococcus oceani (strain ATCC 19707 / BCRC 17464 / JCM 30415 / NCIMB 11848 / C-107).